A 233-amino-acid polypeptide reads, in one-letter code: uncharacterized protein (233 aa).

It belongs to the asfivirus H233R family.

This is an uncharacterized protein from African swine fever virus (isolate Warthog/Namibia/Wart80/1980) (ASFV).